A 908-amino-acid chain; its full sequence is MGVNDLWQILEPVKQHIPLRNLGGKTIAVDLSLWVCEAQTVKKMMGSVMKPHLRNLFFRISYLTQMDVKLVFVMEGEPPKLKADVISKRNQSRYGSSGKSWSQKTGRSHFKSVLRECLHMLECLGIPWVQAAGEAEAMCAYLNAGGHVDGCLTNDGDTFLYGAQTVYRNFTMNTKDPHVDCYTMSSIKSKLGLDRDALVGLAILLGCDYLPKGVPGVGKEQALKLIQILKGQSLLQRFNRWNETSCNSSPQLLVTKKLAHCSVCSHPGSPKDHERNGCRLCKSDKYCEPHDYEYCCPCEWHRTEHDRQLSEVENNIKKKACCCEGFPFHEVIQEFLLNKDKLVKVIRYQRPDLLLFQRFTLEKMEWPNHYACEKLLVLLTHYDMIERKLGSRNSNQLQPIRIVKTRIRNGVHCFEIEWEKPEHYAMEDKQHGEFALLTIEEESLFEAAYPEIVAVYQKQKLEIKGKKQKRIKPKENNLPEPDEVMSFQSHMTLKPTCEIFHKQNSKLNSGISPDPTLPQESISASLNSLLLPKNTPCLNAQEQFMSSLRPLAIQQIKAVSKSLISESSQPNTSSHNISVIADLHLSTIDWEGTSFSNSPAIQRNTFSHDLKSEVESELSAIPDGFENIPEQLSCESERYTANIKKVLDEDSDGISPEEHLLSGITDLCLQDLPLKERIFTKLSYPQDNLQPDVNLKTLSILSVKESCIANSGSDCTSHLSKDLPGIPLQNESRDSKILKGDQLLQEDYKVNTSVPYSVSNTVVKTCNVRPPNTALDHSRKVDMQTTRKILMKKSVCLDRHSSDEQSAPVFGKAKYTTQRMKHSSQKHNSSHFKESGHNKLSSPKIHIKETEQCVRSYETAENEESCFPDSTKSSLSSLQCHKKENNSGTCLDSPLPLRQRLKLRFQST.

An XPG-N domain region spans residues 2-96 (GVNDLWQILE…SKRNQSRYGS (95 aa)). Mg(2+) is bound by residues D30, E75, E134, E136, D155, D157, and D208. Positions 122 to 208 (ECLGIPWVQA…VGLAILLGCD (87 aa)) are XPG-I domain. The segment at 208–384 (DYLPKGVPGV…LLVLLTHYDM (177 aa)) is 5'-3' exonuclease domain. The tract at residues 390 to 464 (GSRNSNQLQP…VYQKQKLEIK (75 aa)) is chromodomain. A phosphoserine mark is found at S801 and S802.

It belongs to the XPG/RAD2 endonuclease family. GEN subfamily. Largely monomeric, dimerizes on the Holliday junction and the first nick occurs upon dimerization at the junction. The cofactor is Mg(2+).

It localises to the nucleus. Its function is as follows. Endonuclease which resolves Holliday junctions (HJs) by the introduction of symmetrically related cuts across the junction point, to produce nicked duplex products in which the nicks can be readily ligated. Four-way DNA intermediates, also known as Holliday junctions, are formed during homologous recombination and DNA repair, and their resolution is necessary for proper chromosome segregation. Cleaves HJs by a nick and counter-nick mechanism involving dual coordinated incisions that lead to the formation of ligatable nicked duplex products. Cleavage of the first strand is rate limiting, while second strand cleavage is rapid. Largely monomeric, dimerizes on the HJ and the first nick occurs upon dimerization at the junction. Efficiently cleaves both single and double HJs contained within large recombination intermediates. Exhibits a weak sequence preference for incision between two G residues that reside in a T-rich region of DNA. Also has endonuclease activity on 5'-flap and replication fork (RF) DNA substrates. The polypeptide is Flap endonuclease GEN homolog 1 (GEN1) (Homo sapiens (Human)).